Consider the following 687-residue polypeptide: Glycine--tRNA ligase beta subunit (687 aa).

Belongs to the class-II aminoacyl-tRNA synthetase family. Tetramer of two alpha and two beta subunits.

The protein localises to the cytoplasm. It carries out the reaction tRNA(Gly) + glycine + ATP = glycyl-tRNA(Gly) + AMP + diphosphate. In Geobacter sulfurreducens (strain ATCC 51573 / DSM 12127 / PCA), this protein is Glycine--tRNA ligase beta subunit.